Here is a 546-residue protein sequence, read N- to C-terminus: Chaperonin GroEL (546 aa).

ATP is bound by residues 30 to 33 (TLGP), K51, 87 to 91 (DGTTT), G415, 479 to 481 (NAA), and D495.

The protein belongs to the chaperonin (HSP60) family. As to quaternary structure, forms a cylinder of 14 subunits composed of two heptameric rings stacked back-to-back. Interacts with the co-chaperonin GroES.

It is found in the cytoplasm. The enzyme catalyses ATP + H2O + a folded polypeptide = ADP + phosphate + an unfolded polypeptide.. Functionally, together with its co-chaperonin GroES, plays an essential role in assisting protein folding. The GroEL-GroES system forms a nano-cage that allows encapsulation of the non-native substrate proteins and provides a physical environment optimized to promote and accelerate protein folding. This chain is Chaperonin GroEL, found in Pseudomonas putida (strain ATCC 47054 / DSM 6125 / CFBP 8728 / NCIMB 11950 / KT2440).